The chain runs to 205 residues: uncharacterized protein (205 aa).

Helical transmembrane passes span 12-32 (WQIYVGLLLGLIIGLLVGVGF) and 49-69 (WISSLSTLIIMCFTAVGVMSW).

The protein resides in the host membrane. This is an uncharacterized protein from Haemophilus influenzae (Bacteriophage HP1).